We begin with the raw amino-acid sequence, 132 residues long: Riboflavin kinase (132 aa).

13–18 lines the CDP pocket; the sequence is GLGHGS. Mg(2+) contacts are provided by Thr-40 and Asn-42. FMN-binding residues include Thr-98 and Glu-106. 111 to 114 contacts CDP; sequence VYLR.

Belongs to the archaeal riboflavin kinase family. Mg(2+) is required as a cofactor.

It catalyses the reaction riboflavin + CTP = CDP + FMN + H(+). Its pathway is cofactor biosynthesis; FMN biosynthesis; FMN from riboflavin (CTP route): step 1/1. Its function is as follows. Catalyzes the CTP-dependent phosphorylation of riboflavin (vitamin B2) to form flavin mononucleotide (FMN). This chain is Riboflavin kinase, found in Aeropyrum pernix (strain ATCC 700893 / DSM 11879 / JCM 9820 / NBRC 100138 / K1).